The following is a 186-amino-acid chain: Pyridoxal 5'-phosphate synthase subunit PdxT (186 aa).

Position 46–48 (46–48) interacts with L-glutamine; the sequence is GES. Cys-75 functions as the Nucleophile in the catalytic mechanism. L-glutamine-binding positions include Arg-101 and 128 to 129; that span reads IR. Residues His-165 and Glu-167 each act as charge relay system in the active site.

Belongs to the glutaminase PdxT/SNO family. In the presence of PdxS, forms a dodecamer of heterodimers. Only shows activity in the heterodimer.

The catalysed reaction is aldehydo-D-ribose 5-phosphate + D-glyceraldehyde 3-phosphate + L-glutamine = pyridoxal 5'-phosphate + L-glutamate + phosphate + 3 H2O + H(+). It catalyses the reaction L-glutamine + H2O = L-glutamate + NH4(+). It participates in cofactor biosynthesis; pyridoxal 5'-phosphate biosynthesis. Functionally, catalyzes the hydrolysis of glutamine to glutamate and ammonia as part of the biosynthesis of pyridoxal 5'-phosphate. The resulting ammonia molecule is channeled to the active site of PdxS. This Methanocaldococcus jannaschii (strain ATCC 43067 / DSM 2661 / JAL-1 / JCM 10045 / NBRC 100440) (Methanococcus jannaschii) protein is Pyridoxal 5'-phosphate synthase subunit PdxT.